The sequence spans 703 residues: Protein STRUBBELIG-RECEPTOR FAMILY 8 (703 aa).

The N-terminal stretch at 1 to 27 is a signal peptide; that stretch reads MAIGDRAMFTVLLLFIASISGFSVVRC. Over 28 to 291 the chain is Extracellular; it reads VTDPSDVQAL…GKGLSGGVVT (264 aa). 7 LRR repeats span residues 96-120, 122-142, 143-165, 166-190, 192-212, 213-233, and 234-256; these read LKSL…LPPN, TSLN…ISAM, GSLS…IFAD, HKSL…LSTV, TLSV…VLSG, LPLK…PKEL, and SSIQ…PQPE. N-linked (GlcNAc...) asparagine glycosylation is found at Asn-120, Asn-130, Asn-149, and Asn-178. A glycan (N-linked (GlcNAc...) asparagine) is linked at Asn-226. The interval 247-284 is disordered; the sequence is DNVPASPQPERPGKKETPSGSKKPKIGSEEKSSDSGKG. A helical membrane pass occupies residues 292-312; the sequence is GIVFGSLFVAGIIALVLYLCL. At 313–703 the chain is on the cytoplasmic side; it reads HKKKRKVRGS…PEHEHVDISF (391 aa). The region spanning 395–672 is the Protein kinase domain; the sequence is FSQENIIGEG…SEVVQQLVRL (278 aa). Residues 401 to 409 and Lys-423 each bind ATP; that span reads IGEGSLGRV.

Belongs to the protein kinase superfamily. Ser/Thr protein kinase family. As to expression, expressed in seedlings, roots, stems, leaves, flowers and siliques.

It is found in the membrane. The polypeptide is Protein STRUBBELIG-RECEPTOR FAMILY 8 (SRF8) (Arabidopsis thaliana (Mouse-ear cress)).